A 246-amino-acid polypeptide reads, in one-letter code: MTGHWSYCDDDECGPNRWPTGQHQSPINIDLGEVERKDTHDGIKFVNYDHPIQGDIVNNGHSVQMTPELRSEHPEIYGGGLDQVYRLVQYHFHWGENDNEGSEHTLGGLRYPAELHLVHQGVEDPGKLAVVGVFLQLGKEGKALSNEERVLGKLCNPETVTRVENVRLSEKLPANKRSFWRYEGSLTTPPCSEIVTWTIFTEPVTVTHDQLELFRQVQDIEKRPIKKNYRPTQNLNDRKIVHIVAN.

The region spanning 3–244 is the Alpha-carbonic anhydrase domain; that stretch reads GHWSYCDDDE…LNDRKIVHIV (242 aa). Residue H61 is the Proton acceptor of the active site. Zn(2+) contacts are provided by H91, H93, and H116. 187 to 188 contacts substrate; it reads TT.

The protein belongs to the alpha-carbonic anhydrase family. Zn(2+) serves as cofactor.

The enzyme catalyses hydrogencarbonate + H(+) = CO2 + H2O. In terms of biological role, reversible hydration of carbon dioxide. In Caenorhabditis elegans, this protein is Putative carbonic anhydrase 3 (cah-3).